The following is a 348-amino-acid chain: Nicotinate-nucleotide--dimethylbenzimidazole phosphoribosyltransferase (348 aa).

Glu316 serves as the catalytic Proton acceptor.

It belongs to the CobT family.

The enzyme catalyses 5,6-dimethylbenzimidazole + nicotinate beta-D-ribonucleotide = alpha-ribazole 5'-phosphate + nicotinate + H(+). Its pathway is nucleoside biosynthesis; alpha-ribazole biosynthesis; alpha-ribazole from 5,6-dimethylbenzimidazole: step 1/2. Catalyzes the synthesis of alpha-ribazole-5'-phosphate from nicotinate mononucleotide (NAMN) and 5,6-dimethylbenzimidazole (DMB). The polypeptide is Nicotinate-nucleotide--dimethylbenzimidazole phosphoribosyltransferase (Xanthomonas oryzae pv. oryzae (strain PXO99A)).